The sequence spans 142 residues: Hemoglobin subunit alpha-1 (142 aa).

A Globin domain is found at Val2–Arg142. His59 provides a ligand contact to O2. His88 serves as a coordination point for heme b.

Belongs to the globin family. As to quaternary structure, heterotetramer of two alpha chains and two beta chains.

Its function is as follows. Involved in oxygen transport from the lung to the various peripheral tissues. Hemopressin acts as an antagonist peptide of the cannabinoid receptor CNR1. Hemopressin-binding efficiently blocks cannabinoid receptor CNR1 and subsequent signaling. The protein is Hemoglobin subunit alpha-1 (HBA1) of Capra hircus (Goat).